Consider the following 129-residue polypeptide: Protein SirB2 (129 aa).

Residues 1 to 2 (MT) are Periplasmic-facing. Residues 3–23 (IAMLLTLHLICVALSVSLFVA) traverse the membrane as a helical segment. Topologically, residues 24 to 41 (RYWWRYCGHALAAARWTR) are cytoplasmic. The helical transmembrane segment at 42-62 (IVPPVIDTLLLLSGIGLIVKT) threads the bilayer. The Periplasmic portion of the chain corresponds to 63-71 (HILPFTESG). Residues 72 to 92 (SWLTEKLFGVIIYIVLGFIAL) form a helical membrane-spanning segment. At 93–104 (DYRQARSQQARF) the chain is on the cytoplasmic side. A helical membrane pass occupies residues 105–125 (IAFPLALVVLYIIIKLATTKI). At 126–129 (PLLG) the chain is on the periplasmic side.

The protein belongs to the SirB2 family.

It is found in the cell inner membrane. Required for maximal expression of sirC, not required to invade host cells. The chain is Protein SirB2 (sirB2) from Salmonella typhi.